We begin with the raw amino-acid sequence, 537 residues long: Apolipoprotein N-acyltransferase (537 aa).

Helical transmembrane passes span 10–30, 37–57, 76–96, 107–127, 181–201, and 210–230; these read IALA…ITAG, LAPF…VWLI, YWFG…AFFV, FAVL…FALA, IGLW…ATLI, and AWRA…FGAI. One can recognise a CN hydrolase domain in the interval 248 to 501; that stretch reads MQPNLQQDAK…EGILDASLPA (254 aa). Glu295 serves as the catalytic Proton acceptor. Residue Lys360 is part of the active site. Residue Cys413 is the Nucleophile of the active site. A helical transmembrane segment spans residues 507–527; the sequence is IYARVGDVPAAVLVALAVLLA.

The protein belongs to the CN hydrolase family. Apolipoprotein N-acyltransferase subfamily.

It localises to the cell inner membrane. The enzyme catalyses N-terminal S-1,2-diacyl-sn-glyceryl-L-cysteinyl-[lipoprotein] + a glycerophospholipid = N-acyl-S-1,2-diacyl-sn-glyceryl-L-cysteinyl-[lipoprotein] + a 2-acyl-sn-glycero-3-phospholipid + H(+). Its pathway is protein modification; lipoprotein biosynthesis (N-acyl transfer). Its function is as follows. Catalyzes the phospholipid dependent N-acylation of the N-terminal cysteine of apolipoprotein, the last step in lipoprotein maturation. In Bradyrhizobium diazoefficiens (strain JCM 10833 / BCRC 13528 / IAM 13628 / NBRC 14792 / USDA 110), this protein is Apolipoprotein N-acyltransferase.